The following is a 312-amino-acid chain: Olfactory receptor 1493 (312 aa).

Residues 1–23 (MNNKTVITHFLLLGLPIPPEHQQ) are Extracellular-facing. N-linked (GlcNAc...) asparagine glycosylation is present at N3. A helical membrane pass occupies residues 24–48 (LFFALFLIMYLTTFLGNLLIVVLVQ). The Cytoplasmic portion of the chain corresponds to 49-55 (LDSHLHT). Residues 56–77 (PMYLFLSNLSFSDLCFSSVTML) form a helical membrane-spanning segment. Topologically, residues 78-98 (KLLQNIQSQVPSISYAGCLTQ) are extracellular. A disulfide bridge links C95 with C187. Residues 99-118 (IFFFLLFGYLGNFLLVAMAY) form a helical membrane-spanning segment. Over 119–137 (DRYVAICFPLHYTNIMSHK) the chain is Cytoplasmic. A helical transmembrane segment spans residues 138–156 (LCTCLLLVFWIMTSSHAMM). Over 157-194 (HTLLAARLSFCENNVLLNFFCDLFVLLKLACSDTYVNE) the chain is Extracellular. The helical transmembrane segment at 195–217 (LMIHIMGVIIIVIPFVLIVISYA) threads the bilayer. Over 218-234 (KIISSILKVPSTQSIHK) the chain is Cytoplasmic. The chain crosses the membrane as a helical span at residues 235 to 258 (VFSTCGSHLSVVSLFYGTIIGLYL). At 259–270 (CPSGDNFSLKGS) the chain is on the extracellular side. A helical transmembrane segment spans residues 271 to 290 (AMAMMYTVVTPMLNPFIYSL). The Cytoplasmic portion of the chain corresponds to 291–312 (RNRDMKQALIRVTCSKKISLPW).

The protein belongs to the G-protein coupled receptor 1 family. As to expression, olfactory epithelium.

It localises to the cell membrane. In terms of biological role, odorant receptor. This is Olfactory receptor 1493 (Olr1493) from Rattus norvegicus (Rat).